A 300-amino-acid polypeptide reads, in one-letter code: 4-hydroxybenzoate octaprenyltransferase (300 aa).

8 helical membrane-spanning segments follow: residues 32 to 52 (IGTYLLLWPTLWALWLASEGA), 55 to 75 (LKNLFIFVFGVLLMRSAGCVI), 108 to 128 (LFGILVGVSFILVLFTNALTI), 149 to 169 (YLPQVVLGAAFAWGIPMAFAA), 178 to 198 (AWLLYTATVVWTVAYDTMYAM), 222 to 242 (AAVAGLQVLTLGVLFMVGAQH), 246 to 266 (VYYQVSLIIVAVLFVYQQHLI), and 278 to 298 (FLNNHWVGAAVFLGLVLEFLF).

Belongs to the UbiA prenyltransferase family. Mg(2+) serves as cofactor.

Its subcellular location is the cell inner membrane. It catalyses the reaction all-trans-octaprenyl diphosphate + 4-hydroxybenzoate = 4-hydroxy-3-(all-trans-octaprenyl)benzoate + diphosphate. It functions in the pathway cofactor biosynthesis; ubiquinone biosynthesis. Functionally, catalyzes the prenylation of para-hydroxybenzoate (PHB) with an all-trans polyprenyl group. Mediates the second step in the final reaction sequence of ubiquinone-8 (UQ-8) biosynthesis, which is the condensation of the polyisoprenoid side chain with PHB, generating the first membrane-bound Q intermediate 3-octaprenyl-4-hydroxybenzoate. This chain is 4-hydroxybenzoate octaprenyltransferase, found in Hahella chejuensis (strain KCTC 2396).